The chain runs to 127 residues: MAKGGNKLMKLKSVLKKLNSFNTKPNQPPAQTNHSRSSAVSAFPSEDLQTVYVGRTRRTYHVSSDVVSHPLFQQLAAVDGGCGSEDGSISVSCEVVLFEHLLWMLENADADESRPESVYELVEFYAC.

Residues 20-40 (SFNTKPNQPPAQTNHSRSSAV) form a disordered region.

Belongs to the ARG7 family. As to expression, expressed in cotyledons, hypocotyls and roots of young seedlings. Expressed in emerging lateral root, leaves, flowers, stamens and filaments.

It localises to the nucleus. It is found in the cytoplasm. The protein localises to the cell membrane. Functionally, may be involved in the regulation of ethylene receptor signaling. Promotes cell expansion and plant growth. Involved in the regulation of cell elongation. The sequence is that of Auxin-responsive protein SAUR76 from Arabidopsis thaliana (Mouse-ear cress).